We begin with the raw amino-acid sequence, 1070 residues long: MFTIYKSNSLNTLLLKAYHIIEEKPFSNIFEKEIFIYDNKVLFQYLNIFIAEKKGISANFKFYHPNDFIWKLFKIILSKKELKNIFTHSMIIWEIIKILDNKKFFENCSKKKDMIKKFKFSFLMASIFKKYILYRPEWINQWEIEKNISIFDKNEQWQIKLWMEIIHNTKKINQSSDHFANLFYNIQKIIKEKKIKKKYLPKRFFIISSFSMNPSYIKIFQNISIYTDIYFLYITPFKKNIFNFIQDNKIFTDIKIEKKNILNDSLITLWGQYEEIYYFYILKSKKNKVINCFKKNKNKSLLSQIKNNFFNDSEFTRKKRFLEISDHSISINICFNKKNEIEVLYEKLLIFLNENSSIKPGDIVVTSFSLDTYISSINLIFQSIDNKKTIPFFIAKKSSKTTEIMLWSFKKILNLSNSRFENEEILELLDVPEIAEKFNFSEEEIKILYHWIEETNIRWGINEKHKNYLLFPKNKQNTWFYGIEKLLLSYAMNDTEKIWNGVLSCSFINGSRSELIGKLISFIKILEKWQKKLSKLQYLTYWRSLYSDLVSDFFQNNTKIEKSIQIIQKKWIEIIDDSLSSNYLKKISINILKKIFFYKYYDNNHEIFLPGVVNFCYPDSVCYIPFKVICMIGTDHTSIPKTNYLDNFNLLKKYPLIGDINLYQKYSYLFVQSLSCAEKYFYISYIGYSVKDESKVHPSILVDQLLNYITLNFCFIGDQNLSYKENSKKITKYLCKKHKKQFFYETKNIESFIQDDIKNDFKHTEKNISHKNLLKKNTDNEINLKDLINFWKHPIRYFYNSHLKIKIRQKKQKINTTETFLVNPLNSFKIKNKLLDYIIHNKNITKLYQHYLLSGKLPYHFFGEIFWIKNIKEMKLIANKVMQYRIEKEEKKINLNIEKYQIYGVLSEIQSTGLLRWKTSSIRYSDRIALWLEHLIYSILGGCGKSKIIGYKSQIWSFSSLNSHRAHSYLLEYIKGYIKGMKEPLFLTKSGASWLDQVYDERNNCIKNDYYTKIKAYKKLLYTWKGDNYTEGEQEDYYLKKTITISNKKNIKKICESAEKWLIPILKNKG.

The protein belongs to the RecC family. Heterotrimer of RecB, RecC and RecD. All subunits contribute to DNA-binding.

A helicase/nuclease that prepares dsDNA breaks (DSB) for recombinational DNA repair. Binds to DSBs and unwinds DNA via a highly rapid and processive ATP-dependent bidirectional helicase activity. Unwinds dsDNA until it encounters a Chi (crossover hotspot instigator) sequence from the 3' direction. Cuts ssDNA a few nucleotides 3' to the Chi site. The properties and activities of the enzyme are changed at Chi. The Chi-altered holoenzyme produces a long 3'-ssDNA overhang and facilitates RecA-binding to the ssDNA for homologous DNA recombination and repair. Holoenzyme degrades any linearized DNA that is unable to undergo homologous recombination. In the holoenzyme this subunit recognizes the wild-type Chi sequence, and when added to isolated RecB increases its ATP-dependent helicase processivity. This is RecBCD enzyme subunit RecC from Buchnera aphidicola subsp. Acyrthosiphon pisum (strain APS) (Acyrthosiphon pisum symbiotic bacterium).